The following is a 395-amino-acid chain: MATVDRWLLPDGIEEVLPPEAARIEVARRQVLDLFQSWGYEFVVTPHIEYLESLLTGAGQDLDLRTFKVIDPQSGRQMGFRADITPQVARIDAHTLRREGPSRLCYAGSVLHAQPRALSSSRSPIQLGAELYGDASPSSDVEVISLMLAMLQLADVPDVHMDLGHVGIYRGLAQAAGLSGEVEQQLFDALQRKAIDEVITLTEGLPADLSGMLRALVDLCGGREVLSAARERLANAPAPVLAALEDLLAIAERLSVRFPELPLYFDLGELRGYHYHTGVVFAVFVPGVGQSIAQGGRYDDIGADFGRARPATGFSTDLKTLVTLGRAEIELPSGGIWMPDSTDAALWQQVCQLRSEGQRVVQALPGQPLAAARDADCDRQLIQQNGLWQVSPLAS.

This sequence belongs to the class-II aminoacyl-tRNA synthetase family. HisZ subfamily. Heteromultimer composed of HisG and HisZ subunits.

It localises to the cytoplasm. Its pathway is amino-acid biosynthesis; L-histidine biosynthesis; L-histidine from 5-phospho-alpha-D-ribose 1-diphosphate: step 1/9. Its function is as follows. Required for the first step of histidine biosynthesis. May allow the feedback regulation of ATP phosphoribosyltransferase activity by histidine. This chain is ATP phosphoribosyltransferase regulatory subunit, found in Pseudomonas fluorescens (strain Pf0-1).